The primary structure comprises 201 residues: FMN-dependent NADH:quinone oxidoreductase (201 aa).

FMN is bound by residues Ser9 and 93–96 (MYNF).

It belongs to the azoreductase type 1 family. Homodimer. FMN is required as a cofactor.

The catalysed reaction is 2 a quinone + NADH + H(+) = 2 a 1,4-benzosemiquinone + NAD(+). It catalyses the reaction N,N-dimethyl-1,4-phenylenediamine + anthranilate + 2 NAD(+) = 2-(4-dimethylaminophenyl)diazenylbenzoate + 2 NADH + 2 H(+). Functionally, quinone reductase that provides resistance to thiol-specific stress caused by electrophilic quinones. In terms of biological role, also exhibits azoreductase activity. Catalyzes the reductive cleavage of the azo bond in aromatic azo compounds to the corresponding amines. This is FMN-dependent NADH:quinone oxidoreductase from Bradyrhizobium sp. (strain BTAi1 / ATCC BAA-1182).